A 310-amino-acid chain; its full sequence is tRNA-cytidine(32) 2-sulfurtransferase (310 aa).

The PP-loop motif motif lies at 45-50 (SGGKDS). Residues Cys-120, Cys-123, and Cys-211 each contribute to the [4Fe-4S] cluster site.

Belongs to the TtcA family. Homodimer. Requires Mg(2+) as cofactor. [4Fe-4S] cluster is required as a cofactor.

Its subcellular location is the cytoplasm. It catalyses the reaction cytidine(32) in tRNA + S-sulfanyl-L-cysteinyl-[cysteine desulfurase] + AH2 + ATP = 2-thiocytidine(32) in tRNA + L-cysteinyl-[cysteine desulfurase] + A + AMP + diphosphate + H(+). Its pathway is tRNA modification. Functionally, catalyzes the ATP-dependent 2-thiolation of cytidine in position 32 of tRNA, to form 2-thiocytidine (s(2)C32). The sulfur atoms are provided by the cysteine/cysteine desulfurase (IscS) system. This chain is tRNA-cytidine(32) 2-sulfurtransferase, found in Shewanella baltica (strain OS155 / ATCC BAA-1091).